Consider the following 280-residue polypeptide: Shikimate dehydrogenase (NADP(+)) (280 aa).

Residues 15-17 and threonine 62 contribute to the shikimate site; that span reads SMS. Lysine 66 serves as the catalytic Proton acceptor. NADP(+) is bound at residue glutamate 78. Shikimate-binding residues include asparagine 87 and aspartate 102. Residues 127 to 131, 151 to 156, and isoleucine 219 contribute to the NADP(+) site; these read GAGGA and NRTLEK. Tyrosine 221 lines the shikimate pocket. Glycine 242 serves as a coordination point for NADP(+).

It belongs to the shikimate dehydrogenase family. Homodimer.

It carries out the reaction shikimate + NADP(+) = 3-dehydroshikimate + NADPH + H(+). Its pathway is metabolic intermediate biosynthesis; chorismate biosynthesis; chorismate from D-erythrose 4-phosphate and phosphoenolpyruvate: step 4/7. Its function is as follows. Involved in the biosynthesis of the chorismate, which leads to the biosynthesis of aromatic amino acids. Catalyzes the reversible NADPH linked reduction of 3-dehydroshikimate (DHSA) to yield shikimate (SA). This is Shikimate dehydrogenase (NADP(+)) from Bacillus subtilis (strain 168).